Here is a 681-residue protein sequence, read N- to C-terminus: RNA polymerase sigma factor RpoD (681 aa).

2 disordered regions span residues 1–60 (MKKK…ETAK) and 239–270 (DDDE…VSEK). A compositionally biased stretch (basic and acidic residues) spans 261–270 (EERKKVVSEK). Residues 446–516 (MAKSNLRLVV…SRAIADQART (71 aa)) are sigma-70 factor domain-2. The Interaction with polymerase core subunit RpoC signature appears at 470–473 (DLIQ). The sigma-70 factor domain-3 stretch occupies residues 525–601 (DTINRINKVM…DKNIVSSIDH (77 aa)). Residues 614–668 (VLDQLNEREKAVIRMRFGLLDDESDRTLEEIGKELNVTRERVRQIESSAIKKLRS) form a sigma-70 factor domain-4 region. The segment at residues 641–660 (LEEIGKELNVTRERVRQIES) is a DNA-binding region (H-T-H motif).

It belongs to the sigma-70 factor family. RpoD/SigA subfamily. Interacts transiently with the RNA polymerase catalytic core.

The protein resides in the cytoplasm. In terms of biological role, sigma factors are initiation factors that promote the attachment of RNA polymerase to specific initiation sites and are then released. This sigma factor is the primary sigma factor during exponential growth. This is RNA polymerase sigma factor RpoD from Helicobacter pylori (strain J99 / ATCC 700824) (Campylobacter pylori J99).